A 607-amino-acid chain; its full sequence is Phosphomethylpyrimidine synthase (607 aa).

Substrate is bound by residues Asn-216, Met-245, Tyr-274, His-310, 330–332 (SRG), 371–374 (DGLR), and Glu-410. Residue His-414 coordinates Zn(2+). Residue Tyr-437 participates in substrate binding. Residue His-478 coordinates Zn(2+). Residues Cys-558, Cys-561, and Cys-566 each contribute to the [4Fe-4S] cluster site.

This sequence belongs to the ThiC family. As to quaternary structure, homodimer. [4Fe-4S] cluster is required as a cofactor.

The enzyme catalyses 5-amino-1-(5-phospho-beta-D-ribosyl)imidazole + S-adenosyl-L-methionine = 4-amino-2-methyl-5-(phosphooxymethyl)pyrimidine + CO + 5'-deoxyadenosine + formate + L-methionine + 3 H(+). The protein operates within cofactor biosynthesis; thiamine diphosphate biosynthesis. Catalyzes the synthesis of the hydroxymethylpyrimidine phosphate (HMP-P) moiety of thiamine from aminoimidazole ribotide (AIR) in a radical S-adenosyl-L-methionine (SAM)-dependent reaction. This is Phosphomethylpyrimidine synthase from Agrobacterium fabrum (strain C58 / ATCC 33970) (Agrobacterium tumefaciens (strain C58)).